We begin with the raw amino-acid sequence, 882 residues long: DNA mismatch repair protein MutS (882 aa).

627–634 (GPNMAGKS) lines the ATP pocket.

This sequence belongs to the DNA mismatch repair MutS family.

In terms of biological role, this protein is involved in the repair of mismatches in DNA. It is possible that it carries out the mismatch recognition step. This protein has a weak ATPase activity. The protein is DNA mismatch repair protein MutS of Anaeromyxobacter dehalogenans (strain 2CP-C).